A 483-amino-acid chain; its full sequence is NADPH:adrenodoxin oxidoreductase, mitochondrial (483 aa).

The transit peptide at 1–14 (MSRYLARYMVSRYF) directs the protein to the mitochondrion. Residues Ala32, Asp53, Leu61, and Leu97 each coordinate FAD. Residues 169–172 (QGNV), 213–214 (RR), and Glu225 each bind NADP(+). Residues Trp391 and 398–400 (GII) each bind FAD. Gly398 provides a ligand contact to NADP(+).

Belongs to the ferredoxin--NADP reductase type 1 family. It depends on FAD as a cofactor.

Its subcellular location is the mitochondrion. It carries out the reaction 2 reduced [adrenodoxin] + NADP(+) + H(+) = 2 oxidized [adrenodoxin] + NADPH. In terms of biological role, associates in vitro with the adrenodoxin-like protein MFDX1 to form an efficient low potential electron transfer chain that is able to reduce cytochrome C. Functions as accessory mitochondrial protein involved with BIO2 in the plant biotin synthase reaction. The polypeptide is NADPH:adrenodoxin oxidoreductase, mitochondrial (Arabidopsis thaliana (Mouse-ear cress)).